Here is a 91-residue protein sequence, read N- to C-terminus: Small ribosomal subunit protein uS19 (91 aa).

Belongs to the universal ribosomal protein uS19 family.

Functionally, protein S19 forms a complex with S13 that binds strongly to the 16S ribosomal RNA. This Chromohalobacter salexigens (strain ATCC BAA-138 / DSM 3043 / CIP 106854 / NCIMB 13768 / 1H11) protein is Small ribosomal subunit protein uS19.